The following is a 388-amino-acid chain: Sporulation-specific mitogen-activated protein kinase SMK1 (388 aa).

Residues 38–337 enclose the Protein kinase domain; sequence YEIIQFLGKG…VEQAISHPFL (300 aa). ATP contacts are provided by residues 44–52 and K69; that span reads LGKGAYGTV. D166 serves as the catalytic Proton acceptor. Residues 207-209 carry the TXY motif; that stretch reads TNY.

It belongs to the protein kinase superfamily. CMGC Ser/Thr protein kinase family. MAP kinase subfamily. In terms of assembly, interacts with GSC2. It depends on Mg(2+) as a cofactor. Dually phosphorylated on Thr-207 and Tyr-209, which activates the enzyme.

The enzyme catalyses L-seryl-[protein] + ATP = O-phospho-L-seryl-[protein] + ADP + H(+). It catalyses the reaction L-threonyl-[protein] + ATP = O-phospho-L-threonyl-[protein] + ADP + H(+). Its activity is regulated as follows. Activated by tyrosine and threonine phosphorylation. In terms of biological role, required for spore wall assembly. Required for proper deposition of the two outer layers of the spore wall, the chitosan and dityrosine layers. Negatively regulates GSC2, an alternate catalytic subunit of the 1,3-beta-glucan synthase (GS). Participates in a developmentally regulated signal transduction pathway that coordinates cytodifferentiation events with the transcriptional program. This is Sporulation-specific mitogen-activated protein kinase SMK1 (SMK1) from Saccharomyces cerevisiae (strain ATCC 204508 / S288c) (Baker's yeast).